The primary structure comprises 49 residues: Protein YlcJ (49 aa).

Residues 1 to 21 (MSLVLCFLLMSLFFMYSFVLS) form the signal peptide.

The chain is Protein YlcJ from Escherichia coli (strain K12).